Here is a 582-residue protein sequence, read N- to C-terminus: uncharacterized protein (582 aa).

Helical transmembrane passes span 29–49 (LFIV…FAAL), 117–137 (ISAP…MGLA), 155–175 (VWAT…MIIV), 225–245 (YVYI…YFLL), 254–274 (FISI…YLLI), 287–307 (ATVI…IVLI), 329–349 (YLYL…ALSV), 376–396 (SIFG…WGLI), 432–452 (IVYL…LFNI), 458–478 (LVVS…IALS), 491–511 (IGMA…PVFF), and 523–543 (IYLY…GNWI).

Its subcellular location is the cell membrane. This is an uncharacterized protein from Mycoplasmoides gallisepticum (strain R(low / passage 15 / clone 2)) (Mycoplasma gallisepticum).